Consider the following 85-residue polypeptide: Phosphocarrier protein HPr (85 aa).

Positions 1-85 constitute an HPr domain; the sequence is MFQQEVTITA…HLVKLMAELE (85 aa). H15 functions as the Pros-phosphohistidine intermediate in the catalytic mechanism.

Belongs to the HPr family.

Its subcellular location is the cytoplasm. Its function is as follows. General (non sugar-specific) component of the phosphoenolpyruvate-dependent sugar phosphotransferase system (sugar PTS). This major carbohydrate active-transport system catalyzes the phosphorylation of incoming sugar substrates concomitantly with their translocation across the cell membrane. The phosphoryl group from phosphoenolpyruvate (PEP) is transferred to the phosphoryl carrier protein HPr by enzyme I. Phospho-HPr then transfers it to the PTS EIIA domain. This chain is Phosphocarrier protein HPr (ptsH), found in Escherichia coli O157:H7.